Here is an 84-residue protein sequence, read N- to C-terminus: Small ribosomal subunit protein uS17 (84 aa).

It belongs to the universal ribosomal protein uS17 family. In terms of assembly, part of the 30S ribosomal subunit.

Its function is as follows. One of the primary rRNA binding proteins, it binds specifically to the 5'-end of 16S ribosomal RNA. The sequence is that of Small ribosomal subunit protein uS17 from Borrelia duttonii (strain Ly).